The chain runs to 209 residues: Large ribosomal subunit protein bL9 (209 aa).

Positions 184-209 are disordered; sequence SAASEDSDLVETPEDRATEEAEDEQP.

It belongs to the bacterial ribosomal protein bL9 family.

Binds to the 23S rRNA. This chain is Large ribosomal subunit protein bL9, found in Dinoroseobacter shibae (strain DSM 16493 / NCIMB 14021 / DFL 12).